The chain runs to 195 residues: Probable GTP-binding protein EngB (195 aa).

Residues 22–195 enclose the EngB-type G domain; it reads GLPEIALAGR…WGAIKKMINR (174 aa). Residues 30 to 37, 57 to 61, 75 to 78, 142 to 145, and 174 to 176 each bind GTP; these read GRSNVGKS, GKTQT, DVPG, TKAD, and FSS. Ser37 and Thr59 together coordinate Mg(2+).

Belongs to the TRAFAC class TrmE-Era-EngA-EngB-Septin-like GTPase superfamily. EngB GTPase family. Mg(2+) is required as a cofactor.

Necessary for normal cell division and for the maintenance of normal septation. In terms of biological role, binds GTP and GDP. The protein is Probable GTP-binding protein EngB of Bacillus subtilis (strain 168).